Here is a 354-residue protein sequence, read N- to C-terminus: Selenide, water dikinase (354 aa).

Residue Cys23 is part of the active site. Residues Lys26 and 54-56 (TSD) contribute to the ATP site. Mg(2+) is bound at residue Asp57. Residues Asp74, Asp97, and 145–147 (GHS) contribute to the ATP site. Asp97 is a binding site for Mg(2+). Residue Asp233 participates in Mg(2+) binding.

Belongs to the selenophosphate synthase 1 family. Class I subfamily. As to quaternary structure, homodimer. Mg(2+) serves as cofactor.

The enzyme catalyses hydrogenselenide + ATP + H2O = selenophosphate + AMP + phosphate + 2 H(+). Functionally, synthesizes selenophosphate from selenide and ATP. In Burkholderia pseudomallei (strain K96243), this protein is Selenide, water dikinase.